We begin with the raw amino-acid sequence, 607 residues long: Granule-bound starch synthase 1, chloroplastic/amyloplastic (607 aa).

A chloroplast-targeting transit peptide spans 1–77 (MASITASHHF…RPGCSATIVC (77 aa)). An ADP-alpha-D-glucose-binding site is contributed by lysine 95. Residues 585–607 (SGSEPGVEGEEIAPLAKENVATP) form a disordered region.

Belongs to the glycosyltransferase 1 family. Bacterial/plant glycogen synthase subfamily.

It localises to the plastid. The protein localises to the chloroplast. Its subcellular location is the amyloplast. The enzyme catalyses an NDP-alpha-D-glucose + [(1-&gt;4)-alpha-D-glucosyl](n) = [(1-&gt;4)-alpha-D-glucosyl](n+1) + a ribonucleoside 5'-diphosphate + H(+). It functions in the pathway glycan biosynthesis; starch biosynthesis. The protein is Granule-bound starch synthase 1, chloroplastic/amyloplastic (WAXY) of Solanum tuberosum (Potato).